Consider the following 349-residue polypeptide: MSKIRVLSVDDSALMRQIMTEIINSHSDMEMVATAPDPLVARDLIKKFNPDVLTLDVEMPRMDGLDFLEKLMRLRPMPVVMVSSLTGKGSEVTLRALELGAIDFVTKPQLGIREGMLAYSEMIAEKVRTAAKASLAAHKPLSAPTTLKAGPLLSSEKLIAIGASTGGTEAIRHVLQPLPLSSPALLITQHMPPGFTRSFADRLNKLCQIGVKEAEDGERVLPGHAYIAPGDRHMELARSGANYQIKIHDGPAVNRHRPSVDVLFHSVAKQAGRNAVGVILTGMGNDGAAGMLAMRQAGAWTLAQNEASCVVFGMPREAINMGGVCEVVDLNQVSQQMLAKISAGQAIRI.

The region spanning 5 to 122 is the Response regulatory domain; that stretch reads RVLSVDDSAL…REGMLAYSEM (118 aa). Asp56 is subject to 4-aspartylphosphate. A CheB-type methylesterase domain is found at 152-344; that stretch reads LLSSEKLIAI…QQMLAKISAG (193 aa). Catalysis depends on residues Ser164, His190, and Asp286.

The protein belongs to the CheB family. In terms of processing, phosphorylated by CheA. Phosphorylation of the N-terminal regulatory domain activates the methylesterase activity.

The protein localises to the cytoplasm. The enzyme catalyses [protein]-L-glutamate 5-O-methyl ester + H2O = L-glutamyl-[protein] + methanol + H(+). The catalysed reaction is L-glutaminyl-[protein] + H2O = L-glutamyl-[protein] + NH4(+). Its function is as follows. Involved in chemotaxis. Part of a chemotaxis signal transduction system that modulates chemotaxis in response to various stimuli. Catalyzes the demethylation of specific methylglutamate residues introduced into the chemoreceptors (methyl-accepting chemotaxis proteins or MCP) by CheR. Also mediates the irreversible deamidation of specific glutamine residues to glutamic acid. The protein is Protein-glutamate methylesterase/protein-glutamine glutaminase of Escherichia coli O157:H7.